We begin with the raw amino-acid sequence, 92 residues long: Large ribosomal subunit protein eL42 (92 aa).

Residues C11, C14, C70, and C73 each coordinate Zn(2+). Residues 11–73 form a C4-type zinc finger; the sequence is CPNCRKHTVH…LDLRLKCKEC (63 aa).

This sequence belongs to the eukaryotic ribosomal protein eL42 family. In terms of assembly, part of the 50S ribosomal subunit. Zn(2+) serves as cofactor.

Binds to the 23S rRNA. In Methanothermobacter thermautotrophicus (strain ATCC 29096 / DSM 1053 / JCM 10044 / NBRC 100330 / Delta H) (Methanobacterium thermoautotrophicum), this protein is Large ribosomal subunit protein eL42.